Consider the following 122-residue polypeptide: Small ribosomal subunit protein uS13 (122 aa).

A disordered region spans residues 97–122 (PCRGQRTKTNARTRKGPARTVAGKKK).

This sequence belongs to the universal ribosomal protein uS13 family. As to quaternary structure, part of the 30S ribosomal subunit. Forms a loose heterodimer with protein S19. Forms two bridges to the 50S subunit in the 70S ribosome.

Its function is as follows. Located at the top of the head of the 30S subunit, it contacts several helices of the 16S rRNA. In the 70S ribosome it contacts the 23S rRNA (bridge B1a) and protein L5 of the 50S subunit (bridge B1b), connecting the 2 subunits; these bridges are implicated in subunit movement. Contacts the tRNAs in the A and P-sites. In Geobacter sp. (strain M21), this protein is Small ribosomal subunit protein uS13.